We begin with the raw amino-acid sequence, 308 residues long: Ribosomal RNA small subunit methyltransferase H (308 aa).

Residues 31-33 (GGH), Asp51, Phe75, Asp97, and Gln104 each bind S-adenosyl-L-methionine.

The protein belongs to the methyltransferase superfamily. RsmH family.

The protein localises to the cytoplasm. It carries out the reaction cytidine(1402) in 16S rRNA + S-adenosyl-L-methionine = N(4)-methylcytidine(1402) in 16S rRNA + S-adenosyl-L-homocysteine + H(+). Functionally, specifically methylates the N4 position of cytidine in position 1402 (C1402) of 16S rRNA. This is Ribosomal RNA small subunit methyltransferase H from Tolumonas auensis (strain DSM 9187 / NBRC 110442 / TA 4).